We begin with the raw amino-acid sequence, 391 residues long: ATP phosphoribosyltransferase regulatory subunit (391 aa).

Belongs to the class-II aminoacyl-tRNA synthetase family. HisZ subfamily. Heteromultimer composed of HisG and HisZ subunits.

It localises to the cytoplasm. The protein operates within amino-acid biosynthesis; L-histidine biosynthesis; L-histidine from 5-phospho-alpha-D-ribose 1-diphosphate: step 1/9. In terms of biological role, required for the first step of histidine biosynthesis. May allow the feedback regulation of ATP phosphoribosyltransferase activity by histidine. The sequence is that of ATP phosphoribosyltransferase regulatory subunit from Prochlorococcus marinus (strain SARG / CCMP1375 / SS120).